Here is a 408-residue protein sequence, read N- to C-terminus: Acetate kinase (408 aa).

Asparagine 7 lines the Mg(2+) pocket. Residue lysine 14 participates in ATP binding. Substrate is bound at residue arginine 91. Aspartate 148 acts as the Proton donor/acceptor in catalysis. ATP-binding positions include 208–212 (HLGNG), 283–285 (DFR), and 331–335 (GIGEN). Glutamate 384 is a binding site for Mg(2+).

Belongs to the acetokinase family. Homodimer. Mg(2+) serves as cofactor. Mn(2+) is required as a cofactor.

It is found in the cytoplasm. The enzyme catalyses acetate + ATP = acetyl phosphate + ADP. It participates in metabolic intermediate biosynthesis; acetyl-CoA biosynthesis; acetyl-CoA from acetate: step 1/2. In terms of biological role, catalyzes the formation of acetyl phosphate from acetate and ATP. Can also catalyze the reverse reaction. This is Acetate kinase from Methanosarcina mazei (strain ATCC BAA-159 / DSM 3647 / Goe1 / Go1 / JCM 11833 / OCM 88) (Methanosarcina frisia).